Here is a 529-residue protein sequence, read N- to C-terminus: Peptide chain release factor 3 (529 aa).

The region spanning 11–280 (AKRRTFAIIS…GLVEWAPAPM (270 aa)) is the tr-type G domain. GTP-binding positions include 20-27 (SHPDAGKT), 88-92 (DTPGH), and 142-145 (NKLD).

This sequence belongs to the TRAFAC class translation factor GTPase superfamily. Classic translation factor GTPase family. PrfC subfamily.

The protein resides in the cytoplasm. Increases the formation of ribosomal termination complexes and stimulates activities of RF-1 and RF-2. It binds guanine nucleotides and has strong preference for UGA stop codons. It may interact directly with the ribosome. The stimulation of RF-1 and RF-2 is significantly reduced by GTP and GDP, but not by GMP. The polypeptide is Peptide chain release factor 3 (Shigella dysenteriae serotype 1 (strain Sd197)).